The primary structure comprises 351 residues: Phenylalanine--tRNA ligase alpha subunit (351 aa).

Glu-266 is a binding site for Mg(2+).

Belongs to the class-II aminoacyl-tRNA synthetase family. Phe-tRNA synthetase alpha subunit type 1 subfamily. As to quaternary structure, tetramer of two alpha and two beta subunits. Mg(2+) serves as cofactor.

Its subcellular location is the cytoplasm. It carries out the reaction tRNA(Phe) + L-phenylalanine + ATP = L-phenylalanyl-tRNA(Phe) + AMP + diphosphate + H(+). The polypeptide is Phenylalanine--tRNA ligase alpha subunit (Anaplasma marginale (strain St. Maries)).